The primary structure comprises 254 residues: uncharacterized protein (254 aa).

Positions 18, 37, 63, 90, 159, 163, 192, and 194 each coordinate NADP(+). Tyr159 serves as the catalytic Proton donor. The active-site Lowers pKa of active site Tyr is the Lys163.

It belongs to the short-chain dehydrogenases/reductases (SDR) family.

The protein resides in the cytoplasm. Its subcellular location is the nucleus. This is an uncharacterized protein from Schizosaccharomyces pombe (strain 972 / ATCC 24843) (Fission yeast).